The following is a 152-amino-acid chain: Maintenance of carboxysome distribution protein B (152 aa).

Self-associates, interacts with McdA probably via the C-terminus of both proteins. Homohexamerizes. Probably a trimer of dimers. Interacts with most of the shell components of the carboxysome (CcmK2, CcmK3, CcmK4, CcmL and CcmO, but not CcmP) via its C-terminus.

It localises to the carboxysome. McdA and McdB together mediate carboxysome (Cb) spacing, size, ultrastructure and probably inheritance in the cell. Together they prevent Cb aggregation. McdA is an ATPase that forms dynamic gradients on the nucleoid in response to adapter protein McdB, which associates with carboxysomes. The interplay between McdA gradients on the nucleoid and McdB-bound carboxysomes result in the equal spacing of Cbs along the cell length. McdB may have an additional function in cell divison. Stimulates the ATPase activity of McdA, causing McdA to be released from DNA. Overexpression leads to loss of McdA oscillation and formation of large Cb aggregates which colocalize with McdB, as well as diffuse McdB staining in the cytoplasm. Undergoes liquid-liquid phase separation between pH 6.5-7.5 and at concentrations between 1 uM and 167 uM. Forms polar foci upon overexpression in E.coli. Its function is as follows. Incorrect positioning (aggregation) of carboxysomes results in reduced CO(2) fixation by encapsulated RuBisCO, which leads to slower growth, cell elongation, asymmetric cell division and an increase in RuBisCO levels. The sequence is that of Maintenance of carboxysome distribution protein B from Synechococcus elongatus (strain ATCC 33912 / PCC 7942 / FACHB-805) (Anacystis nidulans R2).